The following is a 137-amino-acid chain: Protein MGF 110-7L (137 aa).

A signal peptide spans 1–20 (MLVIILGVIGLLASSNLVSS). N-linked (GlcNAc...) asparagine; by host glycans are attached at residues Asn69, Asn70, and Asn105.

This sequence belongs to the asfaviruses V110 family.

The polypeptide is Protein MGF 110-7L (Ornithodoros (relapsing fever ticks)).